We begin with the raw amino-acid sequence, 211 residues long: Arginine exporter protein ArgO (211 aa).

A run of 6 helical transmembrane segments spans residues 1–21 (MISY…PLGP), 37–57 (LMIA…GIFG), 68–88 (LLAL…FGAL), 111–131 (IIAT…DTFV), 147–167 (WFAL…ALLA), and 179–199 (AQRI…FQLA).

This sequence belongs to the LysE/ArgO transporter (TC 2.A.75) family.

It localises to the cell inner membrane. It carries out the reaction L-arginine(in) = L-arginine(out). Functionally, involved in the export of arginine. Important to control the intracellular level of arginine and the correct balance between arginine and lysine. This chain is Arginine exporter protein ArgO, found in Salmonella choleraesuis (strain SC-B67).